Here is a 685-residue protein sequence, read N- to C-terminus: MTSPAPEHSAAPLRVPAGTTAGTAVREAGYPTKGPDVIVVVRDGEGTLKDLSWTPEVDVDVEPVAASTEDGRSVIRHSAAHVLAQAVQKEFPDAKLGIGPPIKDGFYYDFAVDRPFTPEDLAKLEKRMKQIIKGSQRFSRRVVDSIEDARVELADEPFKLELIDDKSGIDDPEIMEVGGNELTIYDNLDPRTGDKIWSDLCRGPHIPTTKHIPAFKLTRSSAAYWRGNQDNADLQRVYGTAWESTEAQDEYLELLAEAERRDHRKLGTELDLFSFPDELGSGLPVFHPKGGIIRTEMENYSRSRHIEAGYEFVNTPHITKGHLYEVSGHLDWYRDGMFPAMHVDEELNEDGTVRKPGQDYYLKPMNCPMHNLIFRARGRSYRELPLRLFEFGSVYRYEKSGVIHGLTRVRGMTQDDAHIYCTREQMRDELTTTLQFVLNLLKDYGLDDFYLELSTKNPDKFVGSDDVWEEATATLAEVGEASGLTLVPDPGGAAFYGPKISVQVKDALGRTWQMSTIQLDFNLPERFELEYTGNDGVKTRPVMIHRALFGSIERFFGVLTEHYAGAFPAWLAPVQVVGIPVAEAFADHLFDVTKKLKAAGVRAEVDFSDDRMQKKIRNHTTQKVPFMLLAGERDVEAGAVSFRFRDGTQINGIPVDDAVRIITEWIGRRENASPTAELVQPSVAQ.

Residues 1–28 (MTSPAPEHSAAPLRVPAGTTAGTAVREA) are disordered. The 65-residue stretch at 1–65 (MTSPAPEHSA…EVDVDVEPVA (65 aa)) folds into the TGS domain. The tract at residues 262-568 (DHRKLGTELD…LTEHYAGAFP (307 aa)) is catalytic. Residues cysteine 367, histidine 418, and histidine 545 each contribute to the Zn(2+) site.

This sequence belongs to the class-II aminoacyl-tRNA synthetase family. Homodimer. The cofactor is Zn(2+).

Its subcellular location is the cytoplasm. It catalyses the reaction tRNA(Thr) + L-threonine + ATP = L-threonyl-tRNA(Thr) + AMP + diphosphate + H(+). Catalyzes the attachment of threonine to tRNA(Thr) in a two-step reaction: L-threonine is first activated by ATP to form Thr-AMP and then transferred to the acceptor end of tRNA(Thr). Also edits incorrectly charged L-seryl-tRNA(Thr). This is Threonine--tRNA ligase from Rhodococcus erythropolis (strain PR4 / NBRC 100887).